The following is a 317-amino-acid chain: MAKADKKKYSGATTNKQVAAEKHLTSVFKFNTDLGQHILKNPLVAQGIVDKAQIKPSDIVLEVGPGTGNLTVRILEQARKVVAVEMDPRMAAELTKRVHGTPAEKKLEIMLGDFMKTELPYFDICISNTPYQISSPLVFKLINQPRPPRVSILMFQREFAMRLLARPGDSLYCRLSANVQMWANVTHIMKVGRNNFRPPPQVESSVVRIEIKNPRPQIDFNEWDGLLRIVFVRKNRTISAGFKSTTVLEILEKNYKTFLAINNQSIDETENLQSLIKQKIETVLKETGLAEKRAGKCDQTDFLKLLYAFHQVGIHFS.

Residues His37, Leu39, Gly64, Glu85, Asp113, and Asn128 each coordinate S-adenosyl-L-methionine.

Belongs to the class I-like SAM-binding methyltransferase superfamily. rRNA adenine N(6)-methyltransferase family.

It catalyses the reaction adenosine(1779)/adenosine(1780) in 18S rRNA + 4 S-adenosyl-L-methionine = N(6)-dimethyladenosine(1779)/N(6)-dimethyladenosine(1780) in 18S rRNA + 4 S-adenosyl-L-homocysteine + 4 H(+). In terms of biological role, specifically dimethylates two adjacent adenosines in the loop of a conserved hairpin near the 3'-end of 18S rRNA in the 40S particle. The chain is Dimethyladenosine transferase (DIM1) from Candida glabrata (strain ATCC 2001 / BCRC 20586 / JCM 3761 / NBRC 0622 / NRRL Y-65 / CBS 138) (Yeast).